Here is a 516-residue protein sequence, read N- to C-terminus: MSEVKKPLALIILDGFGYSESDKYNAINAAKAPTWRKIWAENPKTTIATSGMAVGLPEGQMGNSEVGHMTLGAGRVVYQNFTRINKAIADGDFYTNPVYTKAVDDAQSQGKAVHVIGLLSDGGVHSHEDHMIAMMELAVKRGAEKVYMHAFLDGRDTPPRSAKAPLQKTEEKLKALGGGKIASIIGRFFALDRDNRWDRVQQAFDLMVDGKAAFTAQSATAGLEAAYERDENDEFVKATAIVDADGKPVTIEDGDAVIFMNFRPDRARQLTNAFVDKNFDGFARARVPALSDFVMTTEYSADIDTSCAYPPEDLVNSFGEVMAKNGKKQLRIAETEKYAHVTFFFSGGQESLYEGEDRILVPSPQVETYDEQPEMSAPEVTAKLVDAIENGGYDAIICNYANCDQVGHTGDFDASVKAVEAVDAALAEVFAALERVGGEALITADHGNVELMYDDEAQQLHTQHTTLPVPLVYVGKRDISLEQGGSLADIAPTMLALLDVPQPTEMNGRNLVKFSK.

Mn(2+) contacts are provided by Asp14 and Ser64. Catalysis depends on Ser64, which acts as the Phosphoserine intermediate. Residues His125, 155 to 156, Arg187, Arg193, 263 to 266, and Lys337 each bind substrate; these read RD and RPDR. The Mn(2+) site is built by Asp404, His408, Asp445, His446, and His464.

Belongs to the BPG-independent phosphoglycerate mutase family. In terms of assembly, monomer. The cofactor is Mn(2+).

It catalyses the reaction (2R)-2-phosphoglycerate = (2R)-3-phosphoglycerate. Its pathway is carbohydrate degradation; glycolysis; pyruvate from D-glyceraldehyde 3-phosphate: step 3/5. Functionally, catalyzes the interconversion of 2-phosphoglycerate and 3-phosphoglycerate. The sequence is that of 2,3-bisphosphoglycerate-independent phosphoglycerate mutase from Saccharophagus degradans (strain 2-40 / ATCC 43961 / DSM 17024).